The sequence spans 255 residues: Acetylglutamate kinase (255 aa).

Substrate is bound by residues 40-41 (GG), arginine 62, and asparagine 153.

Belongs to the acetylglutamate kinase family. ArgB subfamily.

The protein resides in the cytoplasm. The enzyme catalyses N-acetyl-L-glutamate + ATP = N-acetyl-L-glutamyl 5-phosphate + ADP. It functions in the pathway amino-acid biosynthesis; L-arginine biosynthesis; N(2)-acetyl-L-ornithine from L-glutamate: step 2/4. Catalyzes the ATP-dependent phosphorylation of N-acetyl-L-glutamate. The sequence is that of Acetylglutamate kinase from Bacillus cereus (strain G9842).